The chain runs to 274 residues: Large ribosomal subunit protein uL2 (274 aa).

2 disordered regions span residues 34–53 and 216–274; these read IAPI…TMRY and RRPR…RRKK.

Belongs to the universal ribosomal protein uL2 family. In terms of assembly, part of the 50S ribosomal subunit. Forms a bridge to the 30S subunit in the 70S ribosome.

Its function is as follows. One of the primary rRNA binding proteins. Required for association of the 30S and 50S subunits to form the 70S ribosome, for tRNA binding and peptide bond formation. It has been suggested to have peptidyltransferase activity; this is somewhat controversial. Makes several contacts with the 16S rRNA in the 70S ribosome. This Flavobacterium psychrophilum (strain ATCC 49511 / DSM 21280 / CIP 103535 / JIP02/86) protein is Large ribosomal subunit protein uL2.